Here is a 166-residue protein sequence, read N- to C-terminus: Glycine-rich RNA-binding protein GRP1A (166 aa).

Residues 8–86 (YRCFVGGLAW…RSITVNEAQS (79 aa)) form the RRM domain. The disordered stretch occupies residues 68 to 166 (GMNGQDLDGR…YGGSGGGGGW (99 aa)). Composition is skewed to gly residues over residues 88–146 (GSGG…YGGG) and 153–166 (EGGG…GGGW).

Predominantly expressed in meristematic and growing tissue.

It localises to the nucleus. Functionally, may play a general role in circadian phenomena associated with meristematic tissue. The protein is Glycine-rich RNA-binding protein GRP1A of Sinapis alba (White mustard).